The chain runs to 331 residues: MATSLQAAATFLQPAKIAASPSRNVHLRSNQTVGKSFGLDSSQARLTCSLHSDLKDFAGKCSDAAKIAGFALATSALVVSGAGAEGAPKRLTYDEIQSKTYMEVKGTGTANQCPTIDGGSETFSFKAGKYTGKKFCFEPTSFTVKADSVSKNAPPDFQNTKLMTRLTYTLDEIEGPFEVGSDGSVKFKEEDGIDYAAVTVQLPGGERVPFLFTVKQLEASGKPESFSGKFLVPSYRGSSFLDPKGRGGSTGYDNAVALPAGGRGDEEELSKENVKNTAASVGEITLKITKSKPETGEVIGVFESLQPSDTDLGAKVPKDVKIQGVWYGQIE.

A chloroplast-targeting transit peptide spans Met1–Phe57. A thylakoid-targeting transit peptide spans Ala58 to Ala84.

The protein belongs to the PsbO family.

The protein localises to the plastid. It is found in the chloroplast thylakoid membrane. Stabilizes the manganese cluster which is the primary site of water splitting. Regulates dephosphorylation and turnover of the PSII reaction center D1 protein. This chain is Oxygen-evolving enhancer protein 1-2, chloroplastic (PSBO2), found in Arabidopsis thaliana (Mouse-ear cress).